The chain runs to 438 residues: Gamma-glutamyl phosphate reductase (438 aa).

Belongs to the gamma-glutamyl phosphate reductase family.

It is found in the cytoplasm. The catalysed reaction is L-glutamate 5-semialdehyde + phosphate + NADP(+) = L-glutamyl 5-phosphate + NADPH + H(+). It functions in the pathway amino-acid biosynthesis; L-proline biosynthesis; L-glutamate 5-semialdehyde from L-glutamate: step 2/2. Catalyzes the NADPH-dependent reduction of L-glutamate 5-phosphate into L-glutamate 5-semialdehyde and phosphate. The product spontaneously undergoes cyclization to form 1-pyrroline-5-carboxylate. The polypeptide is Gamma-glutamyl phosphate reductase (Prochlorococcus marinus (strain NATL2A)).